We begin with the raw amino-acid sequence, 402 residues long: Tryptophan synthase beta chain (402 aa).

Lys91 bears the N6-(pyridoxal phosphate)lysine mark.

It belongs to the TrpB family. Tetramer of two alpha and two beta chains. It depends on pyridoxal 5'-phosphate as a cofactor.

It catalyses the reaction (1S,2R)-1-C-(indol-3-yl)glycerol 3-phosphate + L-serine = D-glyceraldehyde 3-phosphate + L-tryptophan + H2O. The protein operates within amino-acid biosynthesis; L-tryptophan biosynthesis; L-tryptophan from chorismate: step 5/5. In terms of biological role, the beta subunit is responsible for the synthesis of L-tryptophan from indole and L-serine. In Streptococcus thermophilus (strain ATCC BAA-491 / LMD-9), this protein is Tryptophan synthase beta chain.